The primary structure comprises 229 residues: Non-structural protein P8 (229 aa).

Over residues 13–31 (KMKHNQDRVEEPSQVRVDD) the composition is skewed to basic and acidic residues. Positions 13-46 (KMKHNQDRVEEPSQVRVDDTISQPPRYAPSAPMP) are disordered. Positions 36 to 46 (PPRYAPSAPMP) are enriched in low complexity. 2 helical membrane-spanning segments follow: residues 119-139 (IIHT…VCTL) and 162-182 (SLNP…MVCA).

Belongs to the orbivirus NS3 family. Forms homooligomers via coiled-coil motif. Interacts with host OPTN; this interaction inhibits innate immune response.

The protein localises to the host cell membrane. The protein resides in the host Golgi apparatus. Its function is as follows. Plays a role in the inhibition of host innate immune response. Interacts with host OPTN and thus inhibits the recruitment of TBK1 to the host Golgi apparatus. In turn, downstream partner IRF3 cannot be activated and IFN-beta production is impaired. In terms of biological role, facilitates viral particle release either by increasing plasma membrane permeability through a viroporin-like activity or by viral budding. This is Non-structural protein P8 (Segment-10) from Antilocapra americana (Pronghorn).